A 364-amino-acid chain; its full sequence is Palmitoyltransferase ZDHHC9 (364 aa).

Topologically, residues 1–35 are cytoplasmic; sequence MSVMVVRKKVTRKWEKLPGRNTFCCDGRVMMARQK. Residues 36–56 traverse the membrane as a helical segment; the sequence is GIFYLTLFLILGTCTLFFAFE. At 57–63 the chain is on the lumenal side; that stretch reads CRYLAVQ. A helical membrane pass occupies residues 64 to 84; it reads LSPAIPVFAAMLFLFSMATLL. At 85-183 the chain is on the cytoplasmic side; it reads RTSFSDPGVI…NCVGKRNYRY (99 aa). The region spanning 139–189 is the DHHC domain; it reads KYCYTCKIFRPPRASHCSICDNCVERFDHHCPWVGNCVGKRNYRYFYLFIL. Catalysis depends on cysteine 169, which acts as the S-palmitoyl cysteine intermediate. A helical membrane pass occupies residues 184 to 204; that stretch reads FYLFILSLSLLTIYVFAFNIV. Topologically, residues 205 to 228 are lumenal; that stretch reads YVALKSLKIGFLETLKETPGTVLE. The helical transmembrane segment at 229 to 249 threads the bilayer; sequence VLICFFTLWSVVGLTGFHTFL. At 250 to 364 the chain is on the cytoplasmic side; the sequence is VALNQTTNED…PPQEASEAEK (115 aa). The segment at 303 to 364 is disordered; the sequence is PLEESGSRPP…PPQEASEAEK (62 aa). Residues 310 to 336 show a composition bias toward polar residues; that stretch reads RPPSTQETSSSLLPQSPASTEHMNSNE. Over residues 346–356 the composition is skewed to pro residues; sequence EMPPPEPPEPP.

This sequence belongs to the DHHC palmitoyltransferase family. ERF2/ZDHHC9 subfamily. Interacts with GOLGA7.

The protein resides in the endoplasmic reticulum membrane. It localises to the golgi apparatus membrane. The catalysed reaction is L-cysteinyl-[protein] + hexadecanoyl-CoA = S-hexadecanoyl-L-cysteinyl-[protein] + CoA. Palmitoyltransferase that catalyzes the addition of palmitate onto various protein substrates, such as ADRB2, GSDMD, HRAS, NRAS and CGAS. The ZDHHC9-GOLGA7 complex is a palmitoyltransferase specific for HRAS and NRAS. May have a palmitoyltransferase activity toward the beta-2 adrenergic receptor/ADRB2 and therefore regulate G protein-coupled receptor signaling. Acts as a regulator of innate immunity by catalyzing palmitoylation of CGAS, thereby promoting CGAS homodimerization and cyclic GMP-AMP synthase activity. Activates pyroptosis by catalyzing palmitoylation of gasdermin-D (GSDMD), thereby promoting membrane translocation and pore formation of GSDMD. The sequence is that of Palmitoyltransferase ZDHHC9 (Zdhhc9) from Mus musculus (Mouse).